A 222-amino-acid polypeptide reads, in one-letter code: Pyridoxine/pyridoxamine 5'-phosphate oxidase (222 aa).

Substrate-binding positions include arginine 14–tyrosine 17 and lysine 71. FMN is bound by residues arginine 66–lysine 71, phenylalanine 81–threonine 82, arginine 87, lysine 88, and glutamine 110. Residues tyrosine 128, arginine 132, and serine 136 each coordinate substrate. FMN is bound by residues glutamine 145–serine 146 and tryptophan 190. Arginine 196–asparagine 198 is a binding site for substrate. Arginine 200 serves as a coordination point for FMN.

The protein belongs to the pyridoxamine 5'-phosphate oxidase family. In terms of assembly, homodimer. FMN serves as cofactor.

The enzyme catalyses pyridoxamine 5'-phosphate + O2 + H2O = pyridoxal 5'-phosphate + H2O2 + NH4(+). The catalysed reaction is pyridoxine 5'-phosphate + O2 = pyridoxal 5'-phosphate + H2O2. Its pathway is cofactor metabolism; pyridoxal 5'-phosphate salvage; pyridoxal 5'-phosphate from pyridoxamine 5'-phosphate: step 1/1. It functions in the pathway cofactor metabolism; pyridoxal 5'-phosphate salvage; pyridoxal 5'-phosphate from pyridoxine 5'-phosphate: step 1/1. Its function is as follows. Catalyzes the oxidation of either pyridoxine 5'-phosphate (PNP) or pyridoxamine 5'-phosphate (PMP) into pyridoxal 5'-phosphate (PLP). This chain is Pyridoxine/pyridoxamine 5'-phosphate oxidase, found in Prochlorococcus marinus (strain MIT 9303).